The chain runs to 138 residues: Large ribosomal subunit protein bL17 (138 aa).

The protein belongs to the bacterial ribosomal protein bL17 family. As to quaternary structure, part of the 50S ribosomal subunit. Contacts protein L32.

In Nitrobacter winogradskyi (strain ATCC 25391 / DSM 10237 / CIP 104748 / NCIMB 11846 / Nb-255), this protein is Large ribosomal subunit protein bL17.